The primary structure comprises 367 residues: Probable butyrate kinase (367 aa).

This sequence belongs to the acetokinase family.

The protein resides in the cytoplasm. The catalysed reaction is butanoate + ATP = butanoyl phosphate + ADP. This Bacillus cereus (strain B4264) protein is Probable butyrate kinase.